The chain runs to 444 residues: N-succinylarginine dihydrolase (444 aa).

Residues 19-28 (AGLSFGNVAS), Asn-110, and 137-138 (HR) contribute to the substrate site. The active site involves Glu-174. Residue Arg-214 coordinates substrate. His-250 is an active-site residue. Substrate is bound by residues Asp-252 and Asn-362. Cys-368 (nucleophile) is an active-site residue.

This sequence belongs to the succinylarginine dihydrolase family. As to quaternary structure, homodimer.

The catalysed reaction is N(2)-succinyl-L-arginine + 2 H2O + 2 H(+) = N(2)-succinyl-L-ornithine + 2 NH4(+) + CO2. The protein operates within amino-acid degradation; L-arginine degradation via AST pathway; L-glutamate and succinate from L-arginine: step 2/5. Catalyzes the hydrolysis of N(2)-succinylarginine into N(2)-succinylornithine, ammonia and CO(2). The sequence is that of N-succinylarginine dihydrolase from Shewanella sp. (strain ANA-3).